The chain runs to 236 residues: Phosphoribosylaminoimidazole-succinocarboxamide synthase (236 aa).

The protein belongs to the SAICAR synthetase family.

The catalysed reaction is 5-amino-1-(5-phospho-D-ribosyl)imidazole-4-carboxylate + L-aspartate + ATP = (2S)-2-[5-amino-1-(5-phospho-beta-D-ribosyl)imidazole-4-carboxamido]succinate + ADP + phosphate + 2 H(+). It functions in the pathway purine metabolism; IMP biosynthesis via de novo pathway; 5-amino-1-(5-phospho-D-ribosyl)imidazole-4-carboxamide from 5-amino-1-(5-phospho-D-ribosyl)imidazole-4-carboxylate: step 1/2. The protein is Phosphoribosylaminoimidazole-succinocarboxamide synthase of Campylobacter curvus (strain 525.92).